A 143-amino-acid polypeptide reads, in one-letter code: Nucleoside diphosphate kinase (143 aa).

The ATP site is built by Lys-11, Phe-59, Arg-87, Thr-93, Arg-104, and Asn-114. Residue His-117 is the Pros-phosphohistidine intermediate of the active site.

Belongs to the NDK family. As to quaternary structure, homotetramer. Mg(2+) serves as cofactor.

The protein localises to the cytoplasm. The catalysed reaction is a 2'-deoxyribonucleoside 5'-diphosphate + ATP = a 2'-deoxyribonucleoside 5'-triphosphate + ADP. The enzyme catalyses a ribonucleoside 5'-diphosphate + ATP = a ribonucleoside 5'-triphosphate + ADP. In terms of biological role, major role in the synthesis of nucleoside triphosphates other than ATP. The ATP gamma phosphate is transferred to the NDP beta phosphate via a ping-pong mechanism, using a phosphorylated active-site intermediate. This is Nucleoside diphosphate kinase from Pseudoalteromonas translucida (strain TAC 125).